The primary structure comprises 493 residues: Mitochondrial distribution and morphology protein 10 (493 aa).

This sequence belongs to the MDM10 family. Component of the ER-mitochondria encounter structure (ERMES) or MDM complex, composed of MMM1, MDM10, MDM12 and MDM34. Associates with the mitochondrial outer membrane sorting assembly machinery SAM(core) complex, which consists of SAM35, SAM37 and SAM50, to form a SAM(holo) complex.

Its subcellular location is the mitochondrion outer membrane. Functionally, component of the ERMES/MDM complex, which serves as a molecular tether to connect the endoplasmic reticulum and mitochondria. Components of this complex are involved in the control of mitochondrial shape and protein biogenesis and may function in phospholipid exchange. MDM10 is involved in the late assembly steps of the general translocase of the mitochondrial outer membrane (TOM complex). Functions in the TOM40-specific route of the assembly of outer membrane beta-barrel proteins, including the association of TOM40 with the receptor TOM22 and small TOM proteins. Can associate with the SAM(core) complex as well as the MDM12-MMM1 complex, both involved in late steps of the major beta-barrel assembly pathway, that is responsible for biogenesis of all outer membrane beta-barrel proteins. May act as a switch that shuttles between both complexes and channels precursor proteins into the TOM40-specific pathway. Plays a role in mitochondrial morphology and in the inheritance of mitochondria. In Saccharomyces cerevisiae (strain ATCC 204508 / S288c) (Baker's yeast), this protein is Mitochondrial distribution and morphology protein 10.